We begin with the raw amino-acid sequence, 474 residues long: Vacuolar basic amino acid transporter 2 (474 aa).

Over 1-33 (MSISNWITTAYLITSTSFQPLYGSFSDALGRRN) the chain is Cytoplasmic. Residues 34–54 (CLFFANGAFTIGCLACGFSKN) form a helical membrane-spanning segment. Over 55 to 62 (IYMLSFMR) the chain is Vacuolar. The helical transmembrane segment at 63–85 (ALTGIGGGGLITLSTIVNSDVIP) threads the bilayer. Over 86–97 (SSKRGIFQAFQN) the chain is Cytoplasmic. Residues 98–118 (LLLGFGAICGASFGGTIASSI) traverse the membrane as a helical segment. Residues 119-121 (GWR) lie on the Vacuolar side of the membrane. Residues 122-142 (WCFLIQVPISVISSILMNYYV) form a helical membrane-spanning segment. The Cytoplasmic segment spans residues 143 to 167 (PNQKEYNRQNSSIFQNPGKILRDID). Residues 168–188 (VMGSILIITGLTLQLLYLSLG) form a helical membrane-spanning segment. Residues 189 to 196 (CSTSKLSW) are Vacuolar-facing. The helical transmembrane segment at 197–217 (TSPSVLLLLVGSVIILLLFIL) threads the bilayer. The Cytoplasmic portion of the chain corresponds to 218 to 238 (HERKTSARAIIPMELVNSSYS). Residues 239–259 (VVVLSISILVGFASYAYLFTL) form a helical membrane-spanning segment. Residues 260–273 (PLFFQIVLGDSTAK) are Vacuolar-facing. The helical transmembrane segment at 274–294 (AGLRLTIPSLFTPVGSLITGF) threads the bilayer. The Cytoplasmic segment spans residues 295–303 (SMSKYNCLR). The helical transmembrane segment at 304–324 (LLLYIGISLMFLGNFLFLFIE) threads the bilayer. Residues 325 to 331 (KTSPNWL) are Vacuolar-facing. The helical transmembrane segment at 332 to 352 (IGLFLIPANLGQGITFPTTLF) threads the bilayer. Residues 353 to 375 (TFIFMFSKSDQATATSTLYLFRS) are Cytoplasmic-facing. The helical transmembrane segment at 376–396 (IGSVWGVAISAGVIQLSFAGL) threads the bilayer. The Vacuolar portion of the chain corresponds to 397 to 447 (LRSNLKGLLDENKIKKLIVQLSANSSYIGSLHGEVKNTVIKSFDEATKRAH). The N-linked (GlcNAc...) asparagine glycan is linked to Asn-420. Residues 448 to 468 (LMSTLLSSLALILCILKDNLA) traverse the membrane as a helical segment. Over 469–474 (KPKTRR) the chain is Cytoplasmic.

The protein belongs to the major facilitator superfamily.

It is found in the vacuole membrane. Its function is as follows. Transporter required for vacuolar uptake of histidine, arginine and lysine and to a lesser extent tyrosine. The sequence is that of Vacuolar basic amino acid transporter 2 (VBA2) from Saccharomyces cerevisiae (strain ATCC 204508 / S288c) (Baker's yeast).